Here is a 401-residue protein sequence, read N- to C-terminus: Stearoyl-[acyl-carrier-protein] 9-desaturase 3, chloroplastic (401 aa).

Residues 1–31 (MSMALLLTSPAMKQKPAVITSPRRGSSPSRR) are disordered. Residues 1 to 35 (MSMALLLTSPAMKQKPAVITSPRRGSSPSRRLRVS) constitute a chloroplast transit peptide. Glutamate 140, glutamate 178, histidine 181, glutamate 231, glutamate 264, and histidine 267 together coordinate Fe cation.

This sequence belongs to the fatty acid desaturase type 2 family. In terms of assembly, homodimer. Fe(2+) serves as cofactor. In terms of tissue distribution, ubiquitously expressed with a preference in leaves, flowers and stems.

Its subcellular location is the plastid. It is found in the chloroplast. It carries out the reaction octadecanoyl-[ACP] + 2 reduced [2Fe-2S]-[ferredoxin] + O2 + 2 H(+) = (9Z)-octadecenoyl-[ACP] + 2 oxidized [2Fe-2S]-[ferredoxin] + 2 H2O. It functions in the pathway lipid metabolism; fatty acid metabolism. In terms of biological role, converts stearoyl-ACP to oleoyl-ACP by introduction of a cis double bond between carbons 9 and 10 of the acyl chain. Also able to convert palmitoyl-ACP to palmitoleoyl-ACP at the C9 position. Exhibits delta-9 palmitoyl-[acyl-carrier-protein] desaturase (PAD) activity. Involved in omega-7 monounsaturated fatty acid biosynthesis, especially in the endosperm oil. The polypeptide is Stearoyl-[acyl-carrier-protein] 9-desaturase 3, chloroplastic (S-ACP-DES3) (Arabidopsis thaliana (Mouse-ear cress)).